A 408-amino-acid polypeptide reads, in one-letter code: Bone morphogenetic protein 4 (408 aa).

A signal peptide spans 1–19 (MIPGNRMLMVVLLCQVLLG). A propeptide spanning residues 20–292 (GASHASLIPE…HTLTRRRAKR (273 aa)) is cleaved from the precursor. At serine 91 the chain carries Phosphoserine. The segment at 91–111 (SGEEEEEEQSQGTGLEYPERP) is disordered. Asparagine 144 and asparagine 209 each carry an N-linked (GlcNAc...) asparagine glycan. The tract at residues 281–307 (RGHTLTRRRAKRSPKHHPQRSRKKNKN) is disordered. Residues 284–307 (TLTRRRAKRSPKHHPQRSRKKNKN) show a composition bias toward basic residues. Intrachain disulfides connect cysteine 308–cysteine 373, cysteine 337–cysteine 405, and cysteine 341–cysteine 407. 2 N-linked (GlcNAc...) asparagine glycosylation sites follow: asparagine 350 and asparagine 365.

This sequence belongs to the TGF-beta family. Homodimer; disulfide-linked. Interacts with SOSTDC1, GREM2, RGMA, RGMB and RGMC. Part of a complex consisting of TWSG1 and CHRD. Interacts with the serine proteases, HTRA1 and HTRA3; the interaction with either inhibits BMP4-mediated signaling. The HTRA protease activity is required for this inhibition. Interacts with FBN1 (via N-terminal domain) and FBN2. Interacts with type I receptor BMPR1A. Interacts with type II receptor BMPR2. Interacts with FSTL1; this interaction inhibits the activation of the BMP4/Smad1/5/8 signaling pathway. Interacts with SCUBE3. Interacts with TGFBR3. In the cochlea, detected in nonprosensory regions and outer sulcus (at protein level). Prior to gastrulation, expressed in the extraembryonic ectoderm. Later, expressed in the extraembryonic mesoderm.

The protein resides in the secreted. Its subcellular location is the extracellular space. The protein localises to the extracellular matrix. Growth factor of the TGF-beta superfamily that plays essential roles in many developmental processes, including neurogenesis, vascular development, angiogenesis and osteogenesis. Acts in concert with PTHLH/PTHRP to stimulate ductal outgrowth during embryonic mammary development and to inhibit hair follicle induction. Initiates the canonical BMP signaling cascade by associating with type I receptor BMPR1A and type II receptor BMPR2. Once all three components are bound together in a complex at the cell surface, BMPR2 phosphorylates and activates BMPR1A. In turn, BMPR1A propagates signal by phosphorylating SMAD1/5/8 that travel to the nucleus and act as activators and repressors of transcription of target genes. Positively regulates the expression of odontogenic development regulator MSX1 via inducing the IPO7-mediated import of SMAD1 to the nucleus. Required for MSX1-mediated mesenchymal molar tooth bud development beyond the bud stage, via promoting Wnt signaling. Acts as a positive regulator of odontoblast differentiation during mesenchymal tooth germ formation, expression is repressed during the bell stage by MSX1-mediated inhibition of CTNNB1 signaling. Able to induce its own expression in dental mesenchymal cells and also in the neighboring dental epithelial cells via an MSX1-mediated pathway. Can also signal through non-canonical BMP pathways such as ERK/MAP kinase, PI3K/Akt or SRC cascades. For example, induces SRC phosphorylation which, in turn, activates VEGFR2, leading to an angiogenic response. The chain is Bone morphogenetic protein 4 from Mus musculus (Mouse).